A 295-amino-acid chain; its full sequence is Putative xyloglucan endotransglucosylase/hydrolase protein 1 (295 aa).

An N-terminal signal peptide occupies residues 1–24 (MNKMEYLSIFGFVSVLYLIIRVDA). Residues 27 to 225 (YEVNGIDQSK…WSLAPFKANF (199 aa)) enclose the GH16 domain. Glu-113 acts as the Nucleophile in catalysis. The active-site Proton donor is Glu-117. Xyloglucan contacts are provided by residues Glu-117, 129-131 (QTN), and 139-141 (NRE). An N-linked (GlcNAc...) asparagine glycan is attached at Asn-180. Xyloglucan is bound by residues 204–205 (NW) and Gly-209. Residues Asn-215 and Asn-229 are each glycosylated (N-linked (GlcNAc...) asparagine). Intrachain disulfides connect Cys-233–Cys-242 and Cys-278–Cys-291. Arg-283 contributes to the xyloglucan binding site.

It belongs to the glycosyl hydrolase 16 family. XTH group 1 subfamily. Contains at least one intrachain disulfide bond essential for its enzymatic activity.

The protein localises to the secreted. It is found in the cell wall. It localises to the extracellular space. The protein resides in the apoplast. It catalyses the reaction breaks a beta-(1-&gt;4) bond in the backbone of a xyloglucan and transfers the xyloglucanyl segment on to O-4 of the non-reducing terminal glucose residue of an acceptor, which can be a xyloglucan or an oligosaccharide of xyloglucan.. Functionally, may catalyze xyloglucan endohydrolysis (XEH) and/or endotransglycosylation (XET). Cleaves and religates xyloglucan polymers, an essential constituent of the primary cell wall, and thereby participates in cell wall construction of growing tissues. This Arabidopsis thaliana (Mouse-ear cress) protein is Putative xyloglucan endotransglucosylase/hydrolase protein 1 (XTH1).